Consider the following 536-residue polypeptide: Uridine 5'-monophosphate transferase (536 aa).

The interval 22–84 is disordered; the sequence is ADHPTHTPED…GLQQCSSSPS (63 aa). Residues 31-45 are compositionally biased toward polar residues; it reads DSPQTVPSPRSSSAH. Over residues 48–60 the composition is skewed to basic and acidic residues; sequence EIQELRSLQETRP. The segment covering 66–84 has biased composition (polar residues); it reads RSQSRSSKHGLQQCSSSPS. 6 LRR repeats span residues 140–164, 165–189, 191–211, 212–234, 236–257, and 258–282; these read AGQAGTQLTLRDLNLSQLPPGLHRL, AHLRDLDVADNVNLTRLPEDLSLCK, LERINADGCSIAALPSKIGAL, KNLSEISLAFNELRTLPDSIGQC, SLTTIVVPGCKINKLPASLANL, and TQLKKLDVAANIELSELSPHMNLDD. The 157-residue stretch at 377–533 folds into the Fido domain; sequence ITLDRIFKLN…LEGIATVMNQ (157 aa).

It in the C-terminal section; belongs to the fic family. Interacts with several members of the Arabidopsis RLCK VIIa subfamily.

Its subcellular location is the secreted. It localises to the host cell. The protein localises to the host cell membrane. The catalysed reaction is L-seryl-[protein] + UTP = O-(5'-uridylyl)-L-seryl-[protein] + diphosphate. It catalyses the reaction L-threonyl-[protein] + UTP = uridylyl-L-threonyl-[protein] + diphosphate. Functions both as a virulence and an avirulence gene in Arabidopsis. Causes disease on the Kashmir (Kas) ecotype, but not on Columbia (Col-0) ecotype. Acts by directly uridylylating the conserved phosphorylation sites in the activation loop of a number of host receptor-like cytoplasmic protein kinases (RLCK), including BIK1, RIPK, PBL1 and PBL2, preventing the activation of these kinases and subsequent signal transduction. In susceptible Arabidopsis plants, uridylylation of BIK1 inhibits the PAMP-triggered immunity (PTI) signaling cascade and thereby promotes bacterial virulence. It also inhibits RPM1-dependent effector-triggered immunity (ETI) in mesophyll tissues by targeting RIPK. In contrast, in the resistant ecotype Col-0, xopAC is a major avirulence gene. Uridylylation of PBL2 triggers the PBL2-RKS1 interaction and thus the assembly of the PBL2-RKS1-ZAR1 complex, which, in turn, activates effector-triggered immunity (ETI) against X.campestris. The protein is Uridine 5'-monophosphate transferase of Xanthomonas campestris pv. campestris (strain 8004).